Consider the following 98-residue polypeptide: Cell division topological specificity factor (98 aa).

The protein belongs to the MinE family.

Functionally, prevents the cell division inhibition by proteins MinC and MinD at internal division sites while permitting inhibition at polar sites. This ensures cell division at the proper site by restricting the formation of a division septum at the midpoint of the long axis of the cell. This is Cell division topological specificity factor from Nitrosomonas eutropha (strain DSM 101675 / C91 / Nm57).